An 86-amino-acid chain; its full sequence is Cell division topological specificity factor (86 aa).

It belongs to the MinE family.

In terms of biological role, prevents the cell division inhibition by proteins MinC and MinD at internal division sites while permitting inhibition at polar sites. This ensures cell division at the proper site by restricting the formation of a division septum at the midpoint of the long axis of the cell. This chain is Cell division topological specificity factor, found in Aliivibrio salmonicida (strain LFI1238) (Vibrio salmonicida (strain LFI1238)).